Reading from the N-terminus, the 353-residue chain is Photosystem II D2 protein (353 aa).

Thr2 carries the N-acetylthreonine modification. Thr2 carries the post-translational modification Phosphothreonine. Residues 41–61 (CAYFALGGWFTGTTFVTSWYT) form a helical membrane-spanning segment. His118 contributes to the chlorophyll a binding site. A helical transmembrane segment spans residues 125–141 (GFMLRQFELARSVQLRP). Positions 130 and 143 each coordinate pheophytin a. A helical transmembrane segment spans residues 153-166 (VFVSVFLIYPLGQS). His198 is a chlorophyll a binding site. Residues 208 to 228 (AALLCAIHGATVENTLFEDGD) traverse the membrane as a helical segment. His215 and Phe262 together coordinate a plastoquinone. Residue His215 participates in Fe cation binding. His269 is a binding site for Fe cation. Residues 279-295 (GLWMSALGVVGLALNLR) traverse the membrane as a helical segment.

The protein belongs to the reaction center PufL/M/PsbA/D family. PSII is composed of 1 copy each of membrane proteins PsbA, PsbB, PsbC, PsbD, PsbE, PsbF, PsbH, PsbI, PsbJ, PsbK, PsbL, PsbM, PsbT, PsbX, PsbY, PsbZ, Psb30/Ycf12, at least 3 peripheral proteins of the oxygen-evolving complex and a large number of cofactors. It forms dimeric complexes. The D1/D2 heterodimer binds P680, chlorophylls that are the primary electron donor of PSII, and subsequent electron acceptors. It shares a non-heme iron and each subunit binds pheophytin, quinone, additional chlorophylls, carotenoids and lipids. There is also a Cl(-1) ion associated with D1 and D2, which is required for oxygen evolution. The PSII complex binds additional chlorophylls, carotenoids and specific lipids. serves as cofactor.

It is found in the plastid. It localises to the chloroplast thylakoid membrane. It catalyses the reaction 2 a plastoquinone + 4 hnu + 2 H2O = 2 a plastoquinol + O2. In terms of biological role, photosystem II (PSII) is a light-driven water:plastoquinone oxidoreductase that uses light energy to abstract electrons from H(2)O, generating O(2) and a proton gradient subsequently used for ATP formation. It consists of a core antenna complex that captures photons, and an electron transfer chain that converts photonic excitation into a charge separation. The D1/D2 (PsbA/PsbD) reaction center heterodimer binds P680, the primary electron donor of PSII as well as several subsequent electron acceptors. D2 is needed for assembly of a stable PSII complex. This Morus indica (Mulberry) protein is Photosystem II D2 protein.